The chain runs to 339 residues: Prepilin peptidase EppA (339 aa).

10 consecutive transmembrane segments (helical) span residues 3–23 (LLNV…ITDI), 27–47 (IIPH…GYYY), 48–68 (FGFN…ILSI), 75–95 (VKLF…VFYI), 99–119 (ILYL…YKIL), 125–145 (DIIP…YFIN), 146–166 (IYEI…SIFV), 180–200 (LGYL…TYFI), 204–224 (VLLT…VIYA), and 319–339 (FVPF…LAII).

Belongs to the peptidase A24 family.

Its subcellular location is the cell membrane. In terms of biological role, peptidase that processes the N-terminus of prepilins. This is Prepilin peptidase EppA from Methanocaldococcus jannaschii (strain ATCC 43067 / DSM 2661 / JAL-1 / JCM 10045 / NBRC 100440) (Methanococcus jannaschii).